The primary structure comprises 1960 residues: Myosin-9 (1960 aa).

Ala-2 is modified (N-acetylalanine). The mediates interaction with LIMCH1 stretch occupies residues 2 to 838 (AQQAADKYLY…RLFTKVKPLL (837 aa)). Lys-8 is modified (N6-acetyllysine). The residue at position 11 (Tyr-11) is a Phosphotyrosine. Residues 27-77 (AAKKLVWVPSSKNGFEPASLKEEVGEEAIVELVENGKKVKVNKDDIQKMNP) enclose the Myosin N-terminal SH3-like domain. The Myosin motor domain occupies 81-776 (SKVEDMAELT…VLAHLEEERD (696 aa)). Lys-102 is modified (N6-acetyllysine). Residue 174–181 (GESGAGKT) coordinates ATP. 3 positions are modified to N6-acetyllysine: Lys-299, Lys-435, and Lys-613. Position 628 is a phosphoserine (Ser-628). Positions 654 to 676 (LAKLMATLRNTNPNFVRCIIPNH) are actin-binding. Tyr-754 carries the phosphotyrosine modification. The 30-residue stretch at 779–808 (ITDVIIGFQACCRGYLARKAFAKRQQQLTA) folds into the IQ domain. A coiled-coil region spans residues 841 to 1926 (IRHEDELLAK…LKNKLRRGDL (1086 aa)). Lys-850 carries the N6-succinyllysine modification. 3 positions are modified to N6-acetyllysine: Lys-860, Lys-975, and Lys-1024. A compositionally biased stretch (basic and acidic residues) spans 1035–1055 (RLRREEKQRQELEKTRRKLEG). Positions 1035-1057 (RLRREEKQRQELEKTRRKLEGDS) are disordered. Ser-1114 carries the post-translational modification Phosphoserine. Residues 1117 to 1167 (QEDLESERASRNKAEKQKRDLGEELEALKTELEDTLDSTAAQQELRSKREQ) are disordered. Residues 1122-1148 (SERASRNKAEKQKRDLGEELEALKTEL) show a composition bias toward basic and acidic residues. An N6-acetyllysine mark is found at Lys-1234 and Lys-1249. Positions 1327–1352 (LSTKLKQMEDEKNSFREQLEEEEEAK) are disordered. Residues 1332-1352 (KQMEDEKNSFREQLEEEEEAK) are compositionally biased toward basic and acidic residues. N6-acetyllysine is present on residues Lys-1357, Lys-1392, Lys-1404, Lys-1410, Lys-1459, and Lys-1638. Position 1669 is an N6-succinyllysine (Lys-1669). Residue Ser-1714 is modified to Phosphoserine. The tract at residues 1768–1788 (LERSHAQKNENARQQLERQNK) is disordered. 3 positions are modified to N6-acetyllysine: Lys-1793, Lys-1802, and Lys-1845. The tract at residues 1877 to 1908 (RQLEEAEEEAQRANASRRKLQRELEDATETAD) is disordered. Arg-1923 carries the post-translational modification Omega-N-methylarginine. Thr-1939 is modified (phosphothreonine). A disordered region spans residues 1939–1960 (TGDCSDEEVDGKADGADAKAAE). The residue at position 1943 (Ser-1943) is a Phosphoserine. Basic and acidic residues predominate over residues 1948 to 1960 (DGKADGADAKAAE).

The protein belongs to the TRAFAC class myosin-kinesin ATPase superfamily. Myosin family. Myosin is a hexameric protein that consists of 2 heavy chain subunits (MHC), 2 alkali light chain subunits (MLC) and 2 regulatory light chain subunits (MLC-2). Interacts with RASIP1. Interacts with DDR1. Interacts with PDLIM2. Interacts with SVIL. Interacts with HTRA3. Interacts with Myo7a. Interacts with CFAP95. Interacts with LIMCH1; independently of the integration of MYH9 into the myosin complex. Interacts with RAB3A. Interacts with ZBED4. Interacts with S100A4; this interaction increases cell motility. In terms of processing, ISGylated. Post-translationally, ubiquitination.

The protein localises to the cytoplasm. It localises to the cytoskeleton. It is found in the cell cortex. Its subcellular location is the cytoplasmic vesicle. The protein resides in the secretory vesicle. The protein localises to the cortical granule. In terms of biological role, cellular myosin that appears to play a role in cytokinesis, cell shape, and specialized functions such as secretion and capping. Required for cortical actin clearance prior to oocyte exocytosis. Promotes cell motility in conjunction with S100A4. During cell spreading, plays an important role in cytoskeleton reorganization, focal contact formation (in the margins but not the central part of spreading cells), and lamellipodial retraction; this function is mechanically antagonized by MYH10. The sequence is that of Myosin-9 (Myh9) from Mus musculus (Mouse).